A 61-amino-acid chain; its full sequence is Tryptophyllin-1 (61 aa).

The N-terminal stretch at 1–22 (MDILKKSLFLALFLGLVSISFC) is a signal peptide. A propeptide spanning residues 23-53 (DEEKRQDDDESNESEEKKEIHEEGSQEERRE) is cleaved from the precursor. The tract at residues 24-61 (EEKRQDDDESNESEEKKEIHEEGSQEERREKPPPWVPV) is disordered. Residues 36 to 55 (SEEKKEIHEEGSQEERREKP) show a composition bias toward basic and acidic residues.

As to expression, expressed by the skin glands.

The protein resides in the secreted. In terms of biological role, the synthetic peptide inhibits bradykinin-induced relaxation of rat tail artery smooth muscle, and also has anti-proliferative effects on the human prostate cancer cell lines LNCaP, PC3 and DU145. This Phyllomedusa sauvagei (Sauvage's leaf frog) protein is Tryptophyllin-1.